A 1243-amino-acid polypeptide reads, in one-letter code: MVYYDILAKELEKLYEIAEKARAQGYDPKDIVEIPLANNMGERVAHLISAIHEQLDVKKTAELILELEKQYGFLDWRVGLKLIDYALEGKLIPYDDILKRIDLGVRLALGYITMGVVSAPLEGLVELRIKKRKDGKPYLALYYAGPIRGAGGTAAAVSVLFADYARKKAGLYEYDPTKEEIERYKIEIDSYHNKVARLQYKPSDEEIEFLVKHIPVEINGDPTSDKEVPSYKNLERVETNRIRGGMCLVIAEGIAQKAKKIYGKITEWGKEFGLEHWEFLGEYLKLQKEIQAKLAAESGGEIEGKEIKRKITLFLDEIKKEEITVKYPTPAGKYLQEITAGRPIFSLPMAIGGFRLRYGRSFATGFATSGIHPATMFLTYGFLAIGTQMRGERPKKSTIVTPVTSLHPPIVKLKDGTVKKVHSVVEAIKIANDVEEILFLGDILTAFGDWLNEKANLVPSPYVEEWWIQEFDRAAMKKTDYKIEFDVMKPRKLFKIEGLENLSQYLGIPKDRLEEIIRKPFSRKPTIDEAITISEKLGIPLHPEYTPFWVHITKEELIKLIEELRKAKIQNNKIYFHESQKELKAILEKLFIEHFREGEYFYINESMTKSLLYQLDNLNLEKAKKEFDNAIDALDLVNRLSPIEIRDVAGVYVGFRAGRPEKAKMREMTGRPHGLFPVGEEGGKMRNVIEAYNKGYVKAEFALYYCNHCKRYTIYRKCEVCGNKTKEVYVCKEIINRLKTSLFKQYKDWKKVEEEIASHLWAEAVTHSKNNCREPKRYSLIKLNIKHYVDRAVQKLKLFNIPKLVKGVRGTSNKDHIVERLEKAFLRSVSDVYVNKDGTIRYDGTQIPLTHFRPKDLIGVTIEKLKELGYTHDIYGNPLEREDQILQLKPQDIILPYGILVKSRLNKNKIVRTDAAEAFKKVANFVDEELKRLYNLEPYYNIEKAEDLIGKIVFGIAPHTSAAVVGRIIGFTPIQGIIAHPIWHAGQRRNCDGDETAVMLGLDALINFSREYLPDKRGARTMDAPLVLTLKLELKAVDDEVHDMDIVYNYPLEFYYETLKGSPAKDVKKQCGILTLGDFLKEEDISKIPIGFTHPTKSIRLGNKVSLYKRLKTMQQKTEWQLKLAERIRAVDENIVAEIVIEKHFMPDIKGNLRGFSSQVFRCTKCDTTYDRVPLSGKCPKCGGNIVFTVHEGTIKKYLPTSLYLARKYKIKKFTKQSLFLLDRRIKQIFGGEKKSLADFINS.

The protein belongs to the archaeal DNA polymerase II family. In terms of assembly, heterodimer of a large subunit and a small subunit.

The catalysed reaction is DNA(n) + a 2'-deoxyribonucleoside 5'-triphosphate = DNA(n+1) + diphosphate. It catalyses the reaction Exonucleolytic cleavage in the 3'- to 5'-direction to yield nucleoside 5'-phosphates.. In terms of biological role, possesses two activities: a DNA synthesis (polymerase) and an exonucleolytic activity that degrades single-stranded DNA in the 3'- to 5'-direction. Has a template-primer preference which is characteristic of a replicative DNA polymerase. The chain is DNA polymerase II large subunit from Nanoarchaeum equitans (strain Kin4-M).